Consider the following 263-residue polypeptide: Aminoglycoside 3'-phosphotransferase (263 aa).

Catalysis depends on D183, which acts as the Proton acceptor.

This sequence belongs to the aminoglycoside phosphotransferase family.

It carries out the reaction kanamycin A + ATP = kanamycin 3'-phosphate + ADP + H(+). Functionally, resistance to kanamycin and structurally-related aminoglycosides, including amikacin. In Streptomyces ribosidificus, this protein is Aminoglycoside 3'-phosphotransferase (rph).